Consider the following 423-residue polypeptide: Serine--tRNA ligase (423 aa).

2 stretches are compositionally biased toward basic and acidic residues: residues 1-24 (MIDLKQLRDDPDRVRESQRTRGED) and 62-71 (KMRDASPEEK). A disordered region spans residues 1-71 (MIDLKQLRDD…KMRDASPEEK (71 aa)). 230–232 (TSE) lines the L-serine pocket. ATP contacts are provided by residues 261-263 (RRE) and Val277. Residue Glu284 coordinates L-serine. 348-351 (ELTS) serves as a coordination point for ATP. Residue Thr383 participates in L-serine binding.

This sequence belongs to the class-II aminoacyl-tRNA synthetase family. Type-1 seryl-tRNA synthetase subfamily. As to quaternary structure, homodimer. The tRNA molecule binds across the dimer.

The protein resides in the cytoplasm. It catalyses the reaction tRNA(Ser) + L-serine + ATP = L-seryl-tRNA(Ser) + AMP + diphosphate + H(+). The catalysed reaction is tRNA(Sec) + L-serine + ATP = L-seryl-tRNA(Sec) + AMP + diphosphate + H(+). It functions in the pathway aminoacyl-tRNA biosynthesis; selenocysteinyl-tRNA(Sec) biosynthesis; L-seryl-tRNA(Sec) from L-serine and tRNA(Sec): step 1/1. In terms of biological role, catalyzes the attachment of serine to tRNA(Ser). Is also able to aminoacylate tRNA(Sec) with serine, to form the misacylated tRNA L-seryl-tRNA(Sec), which will be further converted into selenocysteinyl-tRNA(Sec). In Corynebacterium kroppenstedtii (strain DSM 44385 / JCM 11950 / CIP 105744 / CCUG 35717), this protein is Serine--tRNA ligase.